A 675-amino-acid chain; its full sequence is Protein brown (675 aa).

The Cytoplasmic portion of the chain corresponds to 1–419 (MQESGGSSGQ…TEDLRNIRSG (419 aa)). One can recognise an ABC transporter domain in the interval 34–261 (YSFWNECRKK…EVVAESHESL (228 aa)). An ATP-binding site is contributed by 66 to 73 (GGSGAGKT). The segment at 229 to 249 (EDSFETPSGESSASGSGSKSI) is disordered. Residues 236 to 248 (SGESSASGSGSKS) are compositionally biased toward low complexity. Residues 420–440 (LIAFGFFMITAVTLSLMYSGI) form a helical membrane-spanning segment. Residues 441–460 (GGLTQRTVQDVGGSIFMLSN) lie on the Extracellular side of the membrane. The helical transmembrane segment at 461 to 481 (EMIFTFSYGVTYIFPAALPII) threads the bilayer. At 482 to 497 (RREVGEGTYSLSAYYV) the chain is on the cytoplasmic side. The chain crosses the membrane as a helical span at residues 498–518 (ALVLSFVPVAFFKGYVFLSVI). The Extracellular portion of the chain corresponds to 519 to 531 (YASIYYTRGFLLY). Residues 532–552 (LSMGFLMSLSAVAAVGYGVFL) traverse the membrane as a helical segment. The Cytoplasmic segment spans residues 553–568 (SSLFESDKMASECAAP). Residues 569-589 (FDLIFLIFGGTYMNVDTVPGL) form a helical membrane-spanning segment. Topologically, residues 590–644 (KYLSLFFYSNEALMYKFWIDIDNIDCPVNEDHPCIKTGVEVLQQGSYRNADYTYW) are extracellular. The helical transmembrane segment at 645–665 (LDCFSLVVVAVIFHIVSFGLV) threads the bilayer. Residues 666 to 675 (RRYIHRSGYY) lie on the Cytoplasmic side of the membrane.

The protein belongs to the ABC transporter superfamily. ABCG family. Eye pigment precursor importer (TC 3.A.1.204) subfamily. May form a heterodimer with w/white.

It is found in the membrane. The enzyme catalyses guanine(out) + ATP + H2O = guanine(in) + ADP + phosphate + H(+). It carries out the reaction riboflavin(in) + ATP + H2O = riboflavin(out) + ADP + phosphate + H(+). The catalysed reaction is (6S)-5,6,7,8-tetrahydrofolate(out) + ATP + H2O = (6S)-5,6,7,8-tetrahydrofolate(in) + ADP + phosphate + H(+). Its function is as follows. ATP-dependent transporter of the ATP-binding cassette (ABC) family which transports various molecules including bioamines, neurotransmitters and metabolic intermediates. In the eye and probably in association with w/white, required for the transport of the eye red pigment precursor, guanine, into pigment cell granules. In Malpighian tubules, involved in guanine uptake. Probably in association with w/white, involved in aging-induced intestinal stem cell proliferation in the midgut by regulating tetrahydrofolate transport. The polypeptide is Protein brown (Drosophila melanogaster (Fruit fly)).